Consider the following 319-residue polypeptide: tRNA U34 carboxymethyltransferase (319 aa).

Carboxy-S-adenosyl-L-methionine-binding positions include K88, W102, K107, G126, 176-177, M192, Y196, and R311; that span reads LE.

This sequence belongs to the class I-like SAM-binding methyltransferase superfamily. CmoB family. In terms of assembly, homotetramer.

The catalysed reaction is carboxy-S-adenosyl-L-methionine + 5-hydroxyuridine(34) in tRNA = 5-carboxymethoxyuridine(34) in tRNA + S-adenosyl-L-homocysteine + H(+). Catalyzes carboxymethyl transfer from carboxy-S-adenosyl-L-methionine (Cx-SAM) to 5-hydroxyuridine (ho5U) to form 5-carboxymethoxyuridine (cmo5U) at position 34 in tRNAs. The polypeptide is tRNA U34 carboxymethyltransferase (Azotobacter vinelandii (strain DJ / ATCC BAA-1303)).